We begin with the raw amino-acid sequence, 296 residues long: L-fucono-1,5-lactonase (296 aa).

The protein belongs to the metallo-dependent hydrolases superfamily. In terms of assembly, monomer. It depends on Does not require a divalent metal for activity. The purified enzyme contains Zn(2+), but the addition of chelators does not diminish the catalytic activity of the enzyme, indicating that it does not require a divalent cation for substrate turnover. as a cofactor.

The catalysed reaction is L-fucono-1,5-lactone + H2O = L-fuconate + H(+). It carries out the reaction L-fucono-1,4-lactone + H2O = L-fuconate + H(+). The enzyme catalyses D-arabinono-1,4-lactone + H2O = D-arabinonate + H(+). It catalyses the reaction L-xylono-1,4-lactone + H2O = L-xylonate + H(+). The catalysed reaction is L-galactono-1,4-lactone + H2O = L-galactonate + H(+). The protein operates within carbohydrate degradation; L-fucose degradation. In terms of biological role, L-fucono-1,5-lactonase involved in an L-fucose degradation pathway. Catalyzes the hydrolysis of L-fucono-1,5-lactone to L-fuconate. L-fucono-1,5-lactone is the best substrate, but the enzyme can also hydrolyze L-fucono-1,4-lactone, L-galactono-1,4-lactone D-arabinono-1,4-lactone and L-xylono-1,4-lactone. The protein is L-fucono-1,5-lactonase of Burkholderia multivorans (strain ATCC 17616 / 249).